Consider the following 375-residue polypeptide: tRNA-specific 2-thiouridylase MnmA (375 aa).

ATP is bound by residues 12–19 (GMSGGVDS) and Met-38. The interaction with target base in tRNA stretch occupies residues 98-100 (NPD). Cys-103 functions as the Nucleophile in the catalytic mechanism. A disulfide bridge links Cys-103 with Cys-200. Gly-127 provides a ligand contact to ATP. Residues 150–152 (KDQ) form an interaction with tRNA region. Cys-200 serves as the catalytic Cysteine persulfide intermediate. Positions 312-313 (RY) are interaction with tRNA.

It belongs to the MnmA/TRMU family.

The protein localises to the cytoplasm. The enzyme catalyses S-sulfanyl-L-cysteinyl-[protein] + uridine(34) in tRNA + AH2 + ATP = 2-thiouridine(34) in tRNA + L-cysteinyl-[protein] + A + AMP + diphosphate + H(+). Functionally, catalyzes the 2-thiolation of uridine at the wobble position (U34) of tRNA, leading to the formation of s(2)U34. The polypeptide is tRNA-specific 2-thiouridylase MnmA (Lactobacillus johnsonii (strain CNCM I-12250 / La1 / NCC 533)).